Consider the following 96-residue polypeptide: Large ribosomal subunit protein bL28 (96 aa).

Belongs to the bacterial ribosomal protein bL28 family.

In Methylocella silvestris (strain DSM 15510 / CIP 108128 / LMG 27833 / NCIMB 13906 / BL2), this protein is Large ribosomal subunit protein bL28.